The following is a 112-amino-acid chain: Macrodomain Ori protein (112 aa).

Positions 91 to 112 (FHTLSGGKPQVEGAEDYTEADD) are disordered. Acidic residues predominate over residues 103-112 (GAEDYTEADD).

It belongs to the MaoP family.

Functionally, involved in the organization of the Ori region of the chromosome into a macrodomain (MD). It constrains DNA mobility in the Ori macrodomain and limits long-distance DNA interactions with other chromosomal regions. This chain is Macrodomain Ori protein, found in Salmonella choleraesuis (strain SC-B67).